A 453-amino-acid polypeptide reads, in one-letter code: UDP-N-acetylmuramoylalanine--D-glutamate ligase (453 aa).

Position 120–126 (120–126 (GSNGKST)) interacts with ATP.

It belongs to the MurCDEF family.

The protein resides in the cytoplasm. It carries out the reaction UDP-N-acetyl-alpha-D-muramoyl-L-alanine + D-glutamate + ATP = UDP-N-acetyl-alpha-D-muramoyl-L-alanyl-D-glutamate + ADP + phosphate + H(+). The protein operates within cell wall biogenesis; peptidoglycan biosynthesis. Cell wall formation. Catalyzes the addition of glutamate to the nucleotide precursor UDP-N-acetylmuramoyl-L-alanine (UMA). This Teredinibacter turnerae (strain ATCC 39867 / T7901) protein is UDP-N-acetylmuramoylalanine--D-glutamate ligase.